Reading from the N-terminus, the 428-residue chain is Dihydroorotase (428 aa).

H61 and H63 together coordinate Zn(2+). Residues 63-65 (HLR) and N95 each bind substrate. Zn(2+) is bound by residues D153, H180, and H233. N279 contributes to the substrate binding site. Position 306 (D306) interacts with Zn(2+). The active site involves D306. Substrate-binding positions include H310 and 324–325 (FG).

This sequence belongs to the metallo-dependent hydrolases superfamily. DHOase family. Class I DHOase subfamily. It depends on Zn(2+) as a cofactor.

The enzyme catalyses (S)-dihydroorotate + H2O = N-carbamoyl-L-aspartate + H(+). It functions in the pathway pyrimidine metabolism; UMP biosynthesis via de novo pathway; (S)-dihydroorotate from bicarbonate: step 3/3. In terms of biological role, catalyzes the reversible cyclization of carbamoyl aspartate to dihydroorotate. The sequence is that of Dihydroorotase from Geobacillus thermodenitrificans (strain NG80-2).